A 268-amino-acid chain; its full sequence is Ribonuclease P protein subunit p30 (268 aa).

Ala2 carries the N-acetylalanine modification. Ser251 carries the phosphoserine modification.

This sequence belongs to the eukaryotic/archaeal RNase P protein component 3 family. As to quaternary structure, component of nuclear RNase P and RNase MRP ribonucleoproteins. RNase P consists of a catalytic RNA moiety and about 10 protein subunits; POP1, POP4, POP5, POP7, RPP14, RPP21, RPP25, RPP30, RPP38 and RPP40. Within the RNase P complex, POP1, POP7 and RPP25 form the 'finger' subcomplex, POP5, RPP14, RPP40 and homodimeric RPP30 form the 'palm' subcomplex, and RPP21, POP4 and RPP38 form the 'wrist' subcomplex. All subunits of the RNase P complex interact with the catalytic RNA. Several subunits of RNase P are also part of the RNase MRP complex. RNase MRP consists of a catalytic RNA moiety and about 8 protein subunits; POP1, POP7, RPP25, RPP30, RPP38, RPP40 and possibly also POP4 and POP5.

It is found in the nucleus. It localises to the nucleolus. In terms of biological role, component of ribonuclease P, a ribonucleoprotein complex that generates mature tRNA molecules by cleaving their 5'-ends. Also a component of the MRP ribonuclease complex, which cleaves pre-rRNA sequences. The protein is Ribonuclease P protein subunit p30 (Rpp30) of Mus musculus (Mouse).